A 193-amino-acid polypeptide reads, in one-letter code: Ribose 1,5-bisphosphate phosphokinase PhnN (193 aa).

9–16 (GPSGAGKD) is an ATP binding site.

This sequence belongs to the ribose 1,5-bisphosphokinase family.

The enzyme catalyses alpha-D-ribose 1,5-bisphosphate + ATP = 5-phospho-alpha-D-ribose 1-diphosphate + ADP. The protein operates within metabolic intermediate biosynthesis; 5-phospho-alpha-D-ribose 1-diphosphate biosynthesis; 5-phospho-alpha-D-ribose 1-diphosphate from D-ribose 5-phosphate (route II): step 3/3. Functionally, catalyzes the phosphorylation of ribose 1,5-bisphosphate to 5-phospho-D-ribosyl alpha-1-diphosphate (PRPP). The sequence is that of Ribose 1,5-bisphosphate phosphokinase PhnN from Yersinia pestis.